Consider the following 142-residue polypeptide: uncharacterized protein (142 aa).

One can recognise an N-acetyltransferase domain in the interval 2-142 (IHMKQLTSKE…IESYLFRKPV (141 aa)).

Belongs to the acetyltransferase family.

This is an uncharacterized protein from Bacillus subtilis (strain 168).